Consider the following 92-residue polypeptide: MTTIRCVLFAVLLFAYCALLIKARSIDAEAEKTWQEEETKTVAEKSPLKKRGCSDAFPVVCRSPSVKAACYNPNHRSHAFITDVCKHTCHLC.

A signal peptide spans 1 to 23 (MTTIRCVLFAVLLFAYCALLIKA). The propeptide occupies 24-51 (RSIDAEAEKTWQEEETKTVAEKSPLKKR). Disulfide bonds link C53/C92, C61/C85, and C70/C89.

As to expression, transcripts are first expressed mostly in the endoderm (with rare ectodermal cells) in the late planulae. They are mostly expressed in endodermal ganglion cells in the body column and tentacles in primary polyps, as well as in a small number of ectodermal sensory neurons in tentacles and body wall. They are not expressed in nematocytes. In terms of tissue distribution, transcripts are predominantly expressed in ectodermal sensory neurons in early and late planulae. They are expressed in endodermal ganglion cells in the body column and tentacles in primary polyps, as well as in a small number of ectodermal neurons in pharynx. They are not expressed in nematocytes.

Its function is as follows. In vivo, this neuropeptide induces contraction paralysis followed by death (within 2 hours) on 4 zebrafish larvae on the 15 tested. Also induces body contraction in Nematostella 11-dpf polyps. The chain is Neuropeptide ShK-like2 from Nematostella vectensis (Starlet sea anemone).